The chain runs to 124 residues: UPF0231 protein SO_3983 (124 aa).

It belongs to the UPF0231 family.

In Shewanella oneidensis (strain ATCC 700550 / JCM 31522 / CIP 106686 / LMG 19005 / NCIMB 14063 / MR-1), this protein is UPF0231 protein SO_3983.